A 709-amino-acid polypeptide reads, in one-letter code: Elongation factor G (709 aa).

One can recognise a tr-type G domain in the interval 6 to 295 (KFLRNIGIMA…AVCTYLPSPL (290 aa)). GTP contacts are provided by residues 15–22 (AHIDAGKT), 92–96 (DTPGH), and 146–149 (NKMD).

Belongs to the TRAFAC class translation factor GTPase superfamily. Classic translation factor GTPase family. EF-G/EF-2 subfamily.

It localises to the cytoplasm. Catalyzes the GTP-dependent ribosomal translocation step during translation elongation. During this step, the ribosome changes from the pre-translocational (PRE) to the post-translocational (POST) state as the newly formed A-site-bound peptidyl-tRNA and P-site-bound deacylated tRNA move to the P and E sites, respectively. Catalyzes the coordinated movement of the two tRNA molecules, the mRNA and conformational changes in the ribosome. This is Elongation factor G from Amoebophilus asiaticus (strain 5a2).